A 72-amino-acid polypeptide reads, in one-letter code: DNA-directed RNA polymerase subunit epsilon (72 aa).

This sequence belongs to the RNA polymerase subunit epsilon family. In terms of assembly, RNAP is composed of a core of 2 alpha, a beta and a beta' subunit. The core is associated with a delta subunit, and at least one of epsilon or omega. When a sigma factor is associated with the core the holoenzyme is formed, which can initiate transcription.

It carries out the reaction RNA(n) + a ribonucleoside 5'-triphosphate = RNA(n+1) + diphosphate. Functionally, a non-essential component of RNA polymerase (RNAP). This is DNA-directed RNA polymerase subunit epsilon from Staphylococcus aureus (strain JH1).